The sequence spans 124 residues: Nascent polypeptide-associated complex protein (124 aa).

In terms of domain architecture, NAC-A/B spans G7 to G74. Positions A53–E124 are disordered. The segment covering G74–E93 has biased composition (acidic residues).

Belongs to the NAC-alpha family. Homodimer. Interacts with the ribosome. Binds ribosomal RNA.

Its function is as follows. Contacts the emerging nascent chain on the ribosome. The protein is Nascent polypeptide-associated complex protein of Natronomonas pharaonis (strain ATCC 35678 / DSM 2160 / CIP 103997 / JCM 8858 / NBRC 14720 / NCIMB 2260 / Gabara) (Halobacterium pharaonis).